Here is a 508-residue protein sequence, read N- to C-terminus: 6-phosphogluconate dehydrogenase, decarboxylating 2, chloroplastic (508 aa).

The N-terminal 12 residues, 1-12, are a transit peptide targeting the chloroplast; it reads MASPAPAPPAAS. NADP(+) is bound by residues 28-33, 51-53, 95-97, and Asn-123; these read GLATMG, NRT, and VQA. Substrate contacts are provided by residues Asn-123 and 149-151; that span reads SGG. The active-site Proton acceptor is Lys-203. 206 to 207 serves as a coordination point for substrate; the sequence is HN. The Proton donor role is filled by Glu-210. Tyr-211, Lys-284, Arg-311, Arg-475, and His-481 together coordinate substrate.

Belongs to the 6-phosphogluconate dehydrogenase family. In terms of assembly, homodimer.

It is found in the plastid. It localises to the chloroplast. It catalyses the reaction 6-phospho-D-gluconate + NADP(+) = D-ribulose 5-phosphate + CO2 + NADPH. It participates in carbohydrate degradation; pentose phosphate pathway; D-ribulose 5-phosphate from D-glucose 6-phosphate (oxidative stage): step 3/3. Catalyzes the oxidative decarboxylation of 6-phosphogluconate to ribulose 5-phosphate and CO(2), with concomitant reduction of NADP to NADPH. The sequence is that of 6-phosphogluconate dehydrogenase, decarboxylating 2, chloroplastic (G6PGH2) from Oryza sativa subsp. japonica (Rice).